We begin with the raw amino-acid sequence, 932 residues long: Protocadherin gamma-A2 (932 aa).

A signal peptide spans 1 to 28 (MAALQKLPHCRKLFLLCFLLATLWEARA). Cadherin domains are found at residues 29–133 (GQIR…APRF), 134–242 (GVEE…APVF), 243–347 (TQPE…APEF), 348–452 (YMTS…APAF), 453–562 (SRTS…PPEI), and 570–682 (DGST…EPSA). The Extracellular portion of the chain corresponds to 29-692 (GQIRYSVREE…KPNDSDLTLY (664 aa)). Asn419 and Asn545 each carry an N-linked (GlcNAc...) asparagine glycan. Asn685 carries N-linked (GlcNAc...) asparagine glycosylation. The helical transmembrane segment at 693–713 (LVVAVAAVSCVFLAFVIVLLA) threads the bilayer. At 714-932 (HRLRRWHKSR…KKKSGKKEKK (219 aa)) the chain is on the cytoplasmic side. Disordered regions lie at residues 798-841 (LEEE…WPNN) and 902-932 (ATLT…KEKK). Over residues 806-841 (FSQQAPPNTDWRFSQAQRPGTSGSQNGDDTGTWPNN) the composition is skewed to polar residues. Over residues 922–932 (NKKKSGKKEKK) the composition is skewed to basic residues.

It is found in the cell membrane. Its function is as follows. Potential calcium-dependent cell-adhesion protein. May be involved in the establishment and maintenance of specific neuronal connections in the brain. In Pan troglodytes (Chimpanzee), this protein is Protocadherin gamma-A2 (PCDHGA2).